The following is a 579-amino-acid chain: Transcription factor MTB2 (579 aa).

The interval 373–439 (GGMQIDFTNS…PLNHVEAERQ (67 aa)) is disordered. Positions 382–392 (SRPVVSPVPTV) are enriched in low complexity. Basic and acidic residues-rich tracts occupy residues 393–415 (ESEH…DERR) and 425–439 (NGRE…AERQ). The tract at residues 428–441 (EEPLNHVEAERQRR) is basic motif; degenerate. The bHLH domain maps to 428 to 477 (EEPLNHVEAERQRREKLNQRFYALRAVVPNISKMDKASLLGDAIAHITDM). Residues 442-477 (EKLNQRFYALRAVVPNISKMDKASLLGDAIAHITDM) are helix-loop-helix motif.

The protein resides in the nucleus. In terms of biological role, transcription factor that negatively regulates jasmonate (JA) signaling. Negatively regulates JA-dependent response to wounding, JA-induced expression of defense genes, JA-dependent responses against herbivorous insects, and JA-dependent resistance against Botrytis cinerea infection. Plays a positive role in resistance against the bacterial pathogen Pseudomonas syringae pv tomato DC3000. This chain is Transcription factor MTB2, found in Solanum lycopersicum (Tomato).